A 243-amino-acid chain; its full sequence is Vesicle-associated membrane protein-associated protein B (243 aa).

A2 is subject to N-acetylalanine. Topologically, residues 2 to 218 are cytoplasmic; the sequence is AKVEQVLSLE…AALAASGKEE (217 aa). One can recognise an MSP domain in the interval 7-124; the sequence is VLSLEPQHEL…MDSKLRCVFE (118 aa). S146 is subject to Phosphoserine. A Glycyl lysine isopeptide (Lys-Gly) (interchain with G-Cter in SUMO1) cross-link involves residue K147. S159 is modified (phosphoserine). Residues 161 to 196 adopt a coiled-coil conformation; that stretch reads LDDAEVKKVMEECRRLQGEVQRLREESRQLKEEDGL. Phosphoserine is present on S206. The chain crosses the membrane as a helical; Anchor for type IV membrane protein span at residues 219-239; sequence GLSARLLALVVLFFIVGVIIG.

This sequence belongs to the VAMP-associated protein (VAP) (TC 9.B.17) family. In terms of assembly, homodimer, and heterodimer with VAPA. Interacts with VAMP1 and VAMP2. Interacts (via MSP domain) with ZFYVE27. Interacts with RMDN3. Interacts with KIF5A in a ZFYVE27-dependent manner. Interacts (via MSP domain) with STARD3 (via phospho-FFAT motif). Interacts with STARD3NL (via FFAT motif). Interacts with CERT1. Interacts with PLEKHA3 and SACM1L to form a ternary complex. Interacts with VPS13A (via FFAT motif). Interacts with RB1CC1 (via phosphorylated FFAT motif), MIGA2 (via phosphorylated FFAT motif), RMDN3 (via phosphorylated FFAT motif), OSBPL1A (via FFAT motif), KCNB1 (via phosphorylated FFAT motif) and KCNB2 (via phosphorylated FFAT motif). Interacts (via MSP domain) with WDR44; the interactions connect the endoplasmic reticulum (ER) with the endosomal tubule. In terms of tissue distribution, ubiquitous.

Its subcellular location is the endoplasmic reticulum membrane. In terms of biological role, endoplasmic reticulum (ER)-anchored protein that mediates the formation of contact sites between the ER and endosomes via interaction with FFAT motif-containing proteins such as STARD3 or WDR44. Interacts with STARD3 in a FFAT motif phosphorylation dependent manner. Via interaction with WDR44 participates in neosynthesized protein export. Participates in the endoplasmic reticulum unfolded protein response (UPR) by inducing ERN1/IRE1 activity. Involved in cellular calcium homeostasis regulation. The chain is Vesicle-associated membrane protein-associated protein B from Rattus norvegicus (Rat).